The following is a 458-amino-acid chain: MVHYPSDRTRRLSDTIAAIATPPGQGSVGIVRVSGPFCRQIAEQVTGRVPPPRYATFCHFRNRYGEILDQGLILYFPGPHSFTGEDVLELQGHGGPAIMDWLLSSVLQLGVRLARPGEFSERAFLNNKIDLAQAEAIADLIESASEQAARSALRSLHGEFSAQIQTLREQLTELRCVVEANIDFSDEDIDFIERGMVAERLKEIQSTLQSIHRSARQGALLREGVRVVLAGRPNVGKSSLHNRLAGFEAAIVTDVPGTTRDLLRENITIDGLPIHLSDTAGLHNSKDTIEQEGMRRTREELIHADHVLLVADDQSGLTEAEQAILDELPDDVTYTLIFNKIDLSGAPAGRWEELQGIALRLSALTGAGMDLLCQRLKECAGFDRESEGCFSARRRHLEALQRAGAAVVVARKILGDKGAEEILAEELRQAQNALAEITGEYRSDDLLGEIFSTFCIGK.

(6S)-5-formyl-5,6,7,8-tetrahydrofolate contacts are provided by arginine 32, glutamate 89, and lysine 128. One can recognise a TrmE-type G domain in the interval 224-381; it reads GVRVVLAGRP…LCQRLKECAG (158 aa). Asparagine 234 contacts K(+). Residues 234–239, 253–259, and 278–281 each bind GTP; these read NVGKSS, TDVPGTT, and DTAG. Serine 238 serves as a coordination point for Mg(2+). Residues threonine 253, valine 255, and threonine 258 each coordinate K(+). Threonine 259 provides a ligand contact to Mg(2+). Lysine 458 is a (6S)-5-formyl-5,6,7,8-tetrahydrofolate binding site.

It belongs to the TRAFAC class TrmE-Era-EngA-EngB-Septin-like GTPase superfamily. TrmE GTPase family. In terms of assembly, homodimer. Heterotetramer of two MnmE and two MnmG subunits. The cofactor is K(+).

It localises to the cytoplasm. Functionally, exhibits a very high intrinsic GTPase hydrolysis rate. Involved in the addition of a carboxymethylaminomethyl (cmnm) group at the wobble position (U34) of certain tRNAs, forming tRNA-cmnm(5)s(2)U34. This Nitrosococcus oceani (strain ATCC 19707 / BCRC 17464 / JCM 30415 / NCIMB 11848 / C-107) protein is tRNA modification GTPase MnmE.